Here is a 691-residue protein sequence, read N- to C-terminus: Protein 4.2 (691 aa).

G2 carries N-myristoyl glycine lipidation. The segment at 31 to 39 (LTLRRGQSF) is band 3 binding. Residue S248 is modified to Phosphoserine. Y570 is subject to Phosphotyrosine.

It belongs to the transglutaminase superfamily. Transglutaminase family. As to quaternary structure, component of the ankyrin-1 complex in the erythrocyte, composed of ANK1, RHCE, RHAG, SLC4A1, EPB42, GYPA, GYPB and AQP1. Interacts with SLC4A1 (via the cytoplasmic domain); this interaction is mediated by the SLC4A1 Band 3-I dimer. Interacts with ANK1 (via ANK 1-13 repeats). Interacts with AQP1 (via the C-terminal).

Its subcellular location is the cell membrane. The protein localises to the cytoplasm. The protein resides in the cytoskeleton. Component of the ankyrin-1 complex, a multiprotein complex involved in the stability and shape of the erythrocyte membrane. The polypeptide is Protein 4.2 (Mus musculus (Mouse)).